A 308-amino-acid polypeptide reads, in one-letter code: Aspartate carbamoyltransferase catalytic subunit (308 aa).

Carbamoyl phosphate contacts are provided by Arg55 and Thr56. Residue Lys83 coordinates L-aspartate. 3 residues coordinate carbamoyl phosphate: Arg105, His133, and Gln136. L-aspartate is bound by residues Arg166 and Arg220. Residues Gly261 and Pro262 each contribute to the carbamoyl phosphate site.

Belongs to the aspartate/ornithine carbamoyltransferase superfamily. ATCase family. As to quaternary structure, heterododecamer (2C3:3R2) of six catalytic PyrB chains organized as two trimers (C3), and six regulatory PyrI chains organized as three dimers (R2).

The enzyme catalyses carbamoyl phosphate + L-aspartate = N-carbamoyl-L-aspartate + phosphate + H(+). It participates in pyrimidine metabolism; UMP biosynthesis via de novo pathway; (S)-dihydroorotate from bicarbonate: step 2/3. Functionally, catalyzes the condensation of carbamoyl phosphate and aspartate to form carbamoyl aspartate and inorganic phosphate, the committed step in the de novo pyrimidine nucleotide biosynthesis pathway. The polypeptide is Aspartate carbamoyltransferase catalytic subunit (Chlorobium limicola (strain DSM 245 / NBRC 103803 / 6330)).